The chain runs to 213 residues: Thiamine-phosphate synthase (213 aa).

4-amino-2-methyl-5-(diphosphooxymethyl)pyrimidine is bound by residues Q39–K43 and D71. The Mg(2+) site is built by D72 and D91. 4-amino-2-methyl-5-(diphosphooxymethyl)pyrimidine is bound at residue S108. Residue T135–T137 coordinates 2-[(2R,5Z)-2-carboxy-4-methylthiazol-5(2H)-ylidene]ethyl phosphate. K138 lines the 4-amino-2-methyl-5-(diphosphooxymethyl)pyrimidine pocket. 2-[(2R,5Z)-2-carboxy-4-methylthiazol-5(2H)-ylidene]ethyl phosphate is bound by residues G165 and V185–S186.

This sequence belongs to the thiamine-phosphate synthase family. Mg(2+) serves as cofactor.

The enzyme catalyses 2-[(2R,5Z)-2-carboxy-4-methylthiazol-5(2H)-ylidene]ethyl phosphate + 4-amino-2-methyl-5-(diphosphooxymethyl)pyrimidine + 2 H(+) = thiamine phosphate + CO2 + diphosphate. It catalyses the reaction 2-(2-carboxy-4-methylthiazol-5-yl)ethyl phosphate + 4-amino-2-methyl-5-(diphosphooxymethyl)pyrimidine + 2 H(+) = thiamine phosphate + CO2 + diphosphate. The catalysed reaction is 4-methyl-5-(2-phosphooxyethyl)-thiazole + 4-amino-2-methyl-5-(diphosphooxymethyl)pyrimidine + H(+) = thiamine phosphate + diphosphate. It functions in the pathway cofactor biosynthesis; thiamine diphosphate biosynthesis; thiamine phosphate from 4-amino-2-methyl-5-diphosphomethylpyrimidine and 4-methyl-5-(2-phosphoethyl)-thiazole: step 1/1. In terms of biological role, condenses 4-methyl-5-(beta-hydroxyethyl)thiazole monophosphate (THZ-P) and 2-methyl-4-amino-5-hydroxymethyl pyrimidine pyrophosphate (HMP-PP) to form thiamine monophosphate (TMP). The protein is Thiamine-phosphate synthase of Thermoplasma acidophilum (strain ATCC 25905 / DSM 1728 / JCM 9062 / NBRC 15155 / AMRC-C165).